The primary structure comprises 45 residues: Large ribosomal subunit protein bL34c (45 aa).

A disordered region spans residues 1-21; that stretch reads MIQRTLTGTNRKKTKRSGFRS. Basic residues predominate over residues 10–19; that stretch reads NRKKTKRSGF.

Belongs to the bacterial ribosomal protein bL34 family.

The protein resides in the plastid. The protein localises to the chloroplast. The sequence is that of Large ribosomal subunit protein bL34c (rpl34) from Cyanidium caldarium (Red alga).